The primary structure comprises 300 residues: MHDLPDTDFTQRFIFDESDVRGELVALERSYAEVLAKHPYPEPVAQLLGELMAAAALLVGTLKFDGLLILQARSSGAVPLLMVECSSERELRGIARYDETLITPDAGLQDLMPDGSLALTVDPHKGKRYQGIVALDGVDLSESLSNYFVMSEQLGTRFWLKADGHRARGLLLQQLPAAQITDPEERDASWEHVITLASTLTAEEMLGLDNQTILHRLYHEDPVRLFDAQPICFRCSCSRERSANALVSLGLEDAQQLVIEHNGSIEIDCQFCNERYLFDATDVAQLFAGGGVDSPSDTRH.

2 disulfides stabilise this stretch: Cys-235-Cys-237 and Cys-269-Cys-272.

The protein belongs to the HSP33 family. Post-translationally, under oxidizing conditions two disulfide bonds are formed involving the reactive cysteines. Under reducing conditions zinc is bound to the reactive cysteines and the protein is inactive.

It is found in the cytoplasm. In terms of biological role, redox regulated molecular chaperone. Protects both thermally unfolding and oxidatively damaged proteins from irreversible aggregation. Plays an important role in the bacterial defense system toward oxidative stress. In Pseudomonas savastanoi pv. phaseolicola (strain 1448A / Race 6) (Pseudomonas syringae pv. phaseolicola (strain 1448A / Race 6)), this protein is 33 kDa chaperonin.